The primary structure comprises 335 residues: Glycerol-3-phosphate dehydrogenase [NAD(P)+] (335 aa).

NADPH-binding residues include Ser12, Trp13, Arg33, Arg34, and Lys107. Residues Lys107, Gly134, and Ser136 each contribute to the sn-glycerol 3-phosphate site. Position 138 (Ala138) interacts with NADPH. 5 residues coordinate sn-glycerol 3-phosphate: Lys189, Asp242, Ser252, Arg253, and Asn254. Lys189 (proton acceptor) is an active-site residue. An NADPH-binding site is contributed by Arg253. The NADPH site is built by Val277 and Glu279.

The protein belongs to the NAD-dependent glycerol-3-phosphate dehydrogenase family.

Its subcellular location is the cytoplasm. It catalyses the reaction sn-glycerol 3-phosphate + NAD(+) = dihydroxyacetone phosphate + NADH + H(+). The catalysed reaction is sn-glycerol 3-phosphate + NADP(+) = dihydroxyacetone phosphate + NADPH + H(+). It participates in membrane lipid metabolism; glycerophospholipid metabolism. In terms of biological role, catalyzes the reduction of the glycolytic intermediate dihydroxyacetone phosphate (DHAP) to sn-glycerol 3-phosphate (G3P), the key precursor for phospholipid synthesis. The chain is Glycerol-3-phosphate dehydrogenase [NAD(P)+] from Moorella thermoacetica (strain ATCC 39073 / JCM 9320).